The primary structure comprises 264 residues: Thymidylate synthase (264 aa).

R21 contacts dUMP. H51 lines the (6R)-5,10-methylene-5,6,7,8-tetrahydrofolate pocket. Residue 126 to 127 coordinates dUMP; it reads RR. C146 (nucleophile) is an active-site residue. DUMP-binding positions include 166–169, N177, and 207–209; these read RSAD and HIY. D169 contacts (6R)-5,10-methylene-5,6,7,8-tetrahydrofolate. Residue A263 coordinates (6R)-5,10-methylene-5,6,7,8-tetrahydrofolate.

The protein belongs to the thymidylate synthase family. Bacterial-type ThyA subfamily. Homodimer.

It is found in the cytoplasm. The catalysed reaction is dUMP + (6R)-5,10-methylene-5,6,7,8-tetrahydrofolate = 7,8-dihydrofolate + dTMP. The protein operates within pyrimidine metabolism; dTTP biosynthesis. Functionally, catalyzes the reductive methylation of 2'-deoxyuridine-5'-monophosphate (dUMP) to 2'-deoxythymidine-5'-monophosphate (dTMP) while utilizing 5,10-methylenetetrahydrofolate (mTHF) as the methyl donor and reductant in the reaction, yielding dihydrofolate (DHF) as a by-product. This enzymatic reaction provides an intracellular de novo source of dTMP, an essential precursor for DNA biosynthesis. The polypeptide is Thymidylate synthase (Vesicomyosocius okutanii subsp. Calyptogena okutanii (strain HA)).